Here is a 98-residue protein sequence, read N- to C-terminus: MPNIKSAAKRVRQNKVRRLRNKSVRTRFRNVTKQLLKAIEINEEPEKVNELLRLSYSVLDKAAKKGVIHKRQASRRKSRLTAKVKAYLEARSAGSAQS.

Belongs to the bacterial ribosomal protein bS20 family.

Its function is as follows. Binds directly to 16S ribosomal RNA. In Kosmotoga olearia (strain ATCC BAA-1733 / DSM 21960 / TBF 19.5.1), this protein is Small ribosomal subunit protein bS20.